We begin with the raw amino-acid sequence, 692 residues long: Elongation factor G (692 aa).

Residues 8–282 enclose the tr-type G domain; it reads AKTRNIGIMA…AVIAYLPSPL (275 aa). Residues 17–24, 81–85, and 135–138 contribute to the GTP site; these read AHVDAGKT, DTPGH, and NKMD.

The protein belongs to the TRAFAC class translation factor GTPase superfamily. Classic translation factor GTPase family. EF-G/EF-2 subfamily.

The protein localises to the cytoplasm. Its function is as follows. Catalyzes the GTP-dependent ribosomal translocation step during translation elongation. During this step, the ribosome changes from the pre-translocational (PRE) to the post-translocational (POST) state as the newly formed A-site-bound peptidyl-tRNA and P-site-bound deacylated tRNA move to the P and E sites, respectively. Catalyzes the coordinated movement of the two tRNA molecules, the mRNA and conformational changes in the ribosome. This Streptococcus equi subsp. zooepidemicus (strain MGCS10565) protein is Elongation factor G.